The following is a 31-amino-acid chain: Cytochrome b6-f complex subunit 6 (31 aa).

A helical transmembrane segment spans residues 3–23 (ILISYFCFLLIFFLFTLILFF).

The protein belongs to the PetL family. The 4 large subunits of the cytochrome b6-f complex are cytochrome b6, subunit IV (17 kDa polypeptide, PetD), cytochrome f and the Rieske protein, while the 4 small subunits are PetG, PetL, PetM and PetN. The complex functions as a dimer.

It localises to the plastid. The protein localises to the chloroplast thylakoid membrane. In terms of biological role, component of the cytochrome b6-f complex, which mediates electron transfer between photosystem II (PSII) and photosystem I (PSI), cyclic electron flow around PSI, and state transitions. PetL is important for photoautotrophic growth as well as for electron transfer efficiency and stability of the cytochrome b6-f complex. The protein is Cytochrome b6-f complex subunit 6 of Gnetum parvifolium (Small-leaved jointfir).